Reading from the N-terminus, the 172-residue chain is Biogenesis of lysosome-related organelles complex 1 subunit 6 (172 aa).

Disordered stretches follow at residues 1–36 and 135–172; these read MSVP…SPDE and RALK…AKRM. Residues 63-167 adopt a coiled-coil conformation; it reads DLQRSKQALQ…FEREKQLTAR (105 aa). Over residues 143–164 the composition is skewed to basic and acidic residues; the sequence is RQKEELEREQQREKEFEREKQL.

This sequence belongs to the BLOC1S6 family. In terms of assembly, interacts with BLOC1S4 and DTNBP1/BLOC1S7. Homodimer. Component of the biogenesis of lysosome-related organelles complex 1 (BLOC-1) composed of BLOC1S1, BLOC1S2, BLOC1S3, BLOC1S4, BLOC1S5, BLOC1S6, DTNBP1/BLOC1S7 and SNAPIN/BLOC1S8. Octamer composed of one copy each BLOC1S1, BLOC1S2, BLOC1S3, BLOC1S4, BLOC1S5, BLOC1S6, DTNBP1/BLOC1S7 and SNAPIN/BLOC1S8. The BLOC-1 complex associates with the AP-3 protein complex and membrane protein cargos. Interacts with BLOC1S5, F-actin, SNAP25 isoform 1 and isoform 2, SNAP47 and STX12. Phosphorylated. In terms of tissue distribution, widely expressed.

The protein localises to the cytoplasm. It is found in the membrane. In terms of biological role, component of the BLOC-1 complex, a complex that is required for normal biogenesis of lysosome-related organelles (LRO), such as platelet dense granules and melanosomes. In concert with the AP-3 complex, the BLOC-1 complex is required to target membrane protein cargos into vesicles assembled at cell bodies for delivery into neurites and nerve terminals. The BLOC-1 complex, in association with SNARE proteins, is also proposed to be involved in neurite extension. May play a role in intracellular vesicle trafficking, particularly in the vesicle-docking and fusion process. The protein is Biogenesis of lysosome-related organelles complex 1 subunit 6 (BLOC1S6) of Homo sapiens (Human).